We begin with the raw amino-acid sequence, 213 residues long: Thymidylate kinase (213 aa).

Residue Gly10–Thr17 participates in ATP binding.

The protein belongs to the thymidylate kinase family.

It carries out the reaction dTMP + ATP = dTDP + ADP. Phosphorylation of dTMP to form dTDP in both de novo and salvage pathways of dTTP synthesis. The polypeptide is Thymidylate kinase (Limosilactobacillus reuteri (strain DSM 20016) (Lactobacillus reuteri)).